The primary structure comprises 268 residues: WUSCHEL-related homeobox 12 (268 aa).

The span at 1–16 (MNQEGASHSPSSTSTE) shows a compositional bias: polar residues. Disordered stretches follow at residues 1–22 (MNQE…RARW) and 173–198 (SDHN…QNSN). The segment at residues 17–81 (PVRARWSPKP…NRRSRSRRRH (65 aa)) is a DNA-binding region (homeobox; WUS-type).

Belongs to the WUS homeobox family.

It is found in the nucleus. Functionally, transcription factor which may be involved in developmental processes. The sequence is that of WUSCHEL-related homeobox 12 (WOX12) from Arabidopsis thaliana (Mouse-ear cress).